A 301-amino-acid chain; its full sequence is Vomeronasal type-1 receptor 4 (301 aa).

The Extracellular segment spans residues 1-5; the sequence is MASRY. A helical transmembrane segment spans residues 6–26; it reads VAVGMILSQTVVGVLGSFSVL. Topologically, residues 27–48 are cytoplasmic; the sequence is LHYLSFYCTGCRLRSTDLIVKH. The helical transmembrane segment at 49–69 threads the bilayer; the sequence is LIVANFLALRCKGVPQTMAAF. The Extracellular portion of the chain corresponds to 70–88; sequence GVRYFLNALGCKLVFYLHR. Residues 89–109 form a helical membrane-spanning segment; that stretch reads VGRGVSIGTTCLLSVFQVITV. At 110–126 the chain is on the cytoplasmic side; sequence SSRKSRWAKLKEKAPKH. Residues 127-147 form a helical membrane-spanning segment; sequence VGFSVLLCWIVCMLVNIIFPM. The Extracellular segment spans residues 148 to 185; it reads YVTGKWNYTNITVNEDLGYCSGGGNNKIAQTLRAMLLS. Asparagine 154 and asparagine 157 each carry an N-linked (GlcNAc...) asparagine glycan. Residues 186-206 form a helical membrane-spanning segment; sequence FPDVLCLGLMLWVSSSMVCIL. The Cytoplasmic portion of the chain corresponds to 207-234; it reads HRHKQRVQHIDRSNLSPRASPENRATQS. A helical transmembrane segment spans residues 235–255; it reads ILILVSTFVSSYTLSCLFQVC. The Extracellular segment spans residues 256-264; sequence MALLDNPNS. A helical membrane pass occupies residues 265-285; the sequence is LLVNTSALMSVCFPTLSPFVL. At 286–301 the chain is on the cytoplasmic side; the sequence is MSCDPSVYRFCFAWKR.

This sequence belongs to the G-protein coupled receptor 1 family.

It is found in the cell membrane. In terms of biological role, putative pheromone receptor. This is Vomeronasal type-1 receptor 4 (VN1R4) from Homo sapiens (Human).